The chain runs to 91 residues: Putative defective replication initiation protein (91 aa).

In Escherichia coli (strain K12), this protein is Putative defective replication initiation protein (repA1).